We begin with the raw amino-acid sequence, 153 residues long: Zinc finger protein GIS2 (153 aa).

7 CCHC-type zinc fingers span residues 4–21, 23–40, 47–64, 65–82, 92–109, 116–133, and 135–152; these read KACY…DCDS, RLCY…DCTM, KQCY…ECTV, QRCF…ECPE, VSCY…DCMK, LKCY…DCQN, and RLCY…DCPK.

The protein localises to the cytoplasm. Functionally, may act in the sexual differentiation pathway. The polypeptide is Zinc finger protein GIS2 (GIS2) (Saccharomyces cerevisiae (strain ATCC 204508 / S288c) (Baker's yeast)).